Consider the following 83-residue polypeptide: uncharacterized protein (83 aa).

Residues Y58 to L80 form a helical membrane-spanning segment.

Its subcellular location is the membrane. This is an uncharacterized protein from Bacillus subtilis (strain 168).